A 163-amino-acid chain; its full sequence is Transcription elongation factor GreA (163 aa).

A coiled-coil region spans residues 49-80 (ENAEYDAARDRQSEVERRILELERILENAEII).

It belongs to the GreA/GreB family.

Functionally, necessary for efficient RNA polymerase transcription elongation past template-encoded arresting sites. The arresting sites in DNA have the property of trapping a certain fraction of elongating RNA polymerases that pass through, resulting in locked ternary complexes. Cleavage of the nascent transcript by cleavage factors such as GreA or GreB allows the resumption of elongation from the new 3'terminus. GreA releases sequences of 2 to 3 nucleotides. The polypeptide is Transcription elongation factor GreA (Mycoplasmopsis agalactiae (strain NCTC 10123 / CIP 59.7 / PG2) (Mycoplasma agalactiae)).